A 79-amino-acid chain; its full sequence is Large ribosomal subunit protein bL31 (79 aa).

It belongs to the bacterial ribosomal protein bL31 family. Type A subfamily. As to quaternary structure, part of the 50S ribosomal subunit.

In terms of biological role, binds the 23S rRNA. The sequence is that of Large ribosomal subunit protein bL31 from Trichormus variabilis (strain ATCC 29413 / PCC 7937) (Anabaena variabilis).